The chain runs to 158 residues: MAQSVKTMVEGGKATTGPPIGPALGPLGLNVAQVVKEINEKTKEFQGMQVPVTVTVIDPETKKYEITVGVPPTSALLKKELGLEKGASKKKEAVAGNATLEQIKNVAIKKMPSMLAKDLKSAVLEVLGTCVAMGINVEGKDPKEVQKLIKSGQIKIEQ.

The disordered stretch occupies residues 1–21 (MAQSVKTMVEGGKATTGPPIG).

Belongs to the universal ribosomal protein uL11 family. Part of the ribosomal stalk of the 50S ribosomal subunit. Interacts with L10 and the large rRNA to form the base of the stalk. L10 forms an elongated spine to which L12 dimers bind in a sequential fashion forming a multimeric L10(L12)X complex.

Forms part of the ribosomal stalk which helps the ribosome interact with GTP-bound translation factors. This chain is Large ribosomal subunit protein uL11, found in Thermoplasma volcanium (strain ATCC 51530 / DSM 4299 / JCM 9571 / NBRC 15438 / GSS1).